The chain runs to 449 residues: Phosphoglucosamine mutase (449 aa).

The Phosphoserine intermediate role is filled by serine 101. Serine 101, aspartate 242, aspartate 244, and aspartate 246 together coordinate Mg(2+). Phosphoserine is present on serine 101.

The protein belongs to the phosphohexose mutase family. The cofactor is Mg(2+). Activated by phosphorylation.

It carries out the reaction alpha-D-glucosamine 1-phosphate = D-glucosamine 6-phosphate. Functionally, catalyzes the conversion of glucosamine-6-phosphate to glucosamine-1-phosphate. The polypeptide is Phosphoglucosamine mutase (Bradyrhizobium sp. (strain ORS 278)).